Here is a 285-residue protein sequence, read N- to C-terminus: 4-hydroxybenzoate octaprenyltransferase (285 aa).

A run of 7 helical transmembrane segments spans residues 20 to 39 (GSYL…AQGL), 92 to 112 (ALGL…ALNW), 137 to 157 (FPQV…FMAV), 159 to 179 (EAVP…TVAY), 206 to 226 (YDRL…LGMG), 228 to 248 (YLGF…LFIH), and 260 to 280 (ACFS…LGIA).

This sequence belongs to the UbiA prenyltransferase family. Mg(2+) is required as a cofactor.

The protein resides in the cell inner membrane. The enzyme catalyses all-trans-octaprenyl diphosphate + 4-hydroxybenzoate = 4-hydroxy-3-(all-trans-octaprenyl)benzoate + diphosphate. The protein operates within cofactor biosynthesis; ubiquinone biosynthesis. Functionally, catalyzes the prenylation of para-hydroxybenzoate (PHB) with an all-trans polyprenyl group. Mediates the second step in the final reaction sequence of ubiquinone-8 (UQ-8) biosynthesis, which is the condensation of the polyisoprenoid side chain with PHB, generating the first membrane-bound Q intermediate 3-octaprenyl-4-hydroxybenzoate. This chain is 4-hydroxybenzoate octaprenyltransferase, found in Pseudoalteromonas atlantica (strain T6c / ATCC BAA-1087).